The chain runs to 1391 residues: DNA-directed RNA polymerase subunit beta'' (1391 aa).

Zn(2+) is bound by residues Cys220, Cys291, Cys298, and Cys301.

The protein belongs to the RNA polymerase beta' chain family. RpoC2 subfamily. As to quaternary structure, in plastids the minimal PEP RNA polymerase catalytic core is composed of four subunits: alpha, beta, beta', and beta''. When a (nuclear-encoded) sigma factor is associated with the core the holoenzyme is formed, which can initiate transcription. The cofactor is Zn(2+).

It is found in the plastid. It localises to the chloroplast. It catalyses the reaction RNA(n) + a ribonucleoside 5'-triphosphate = RNA(n+1) + diphosphate. In terms of biological role, DNA-dependent RNA polymerase catalyzes the transcription of DNA into RNA using the four ribonucleoside triphosphates as substrates. The chain is DNA-directed RNA polymerase subunit beta'' from Gossypium barbadense (Sea Island cotton).